Consider the following 332-residue polypeptide: Biotin synthase (332 aa).

Positions 51–279 (YKVQLASLLS…LSRVRLSAGR (229 aa)) constitute a Radical SAM core domain. The [4Fe-4S] cluster site is built by Cys-66, Cys-70, and Cys-73. [2Fe-2S] cluster contacts are provided by Cys-110, Cys-142, Cys-202, and Arg-274.

It belongs to the radical SAM superfamily. Biotin synthase family. Homodimer. [4Fe-4S] cluster serves as cofactor. Requires [2Fe-2S] cluster as cofactor.

It carries out the reaction (4R,5S)-dethiobiotin + (sulfur carrier)-SH + 2 reduced [2Fe-2S]-[ferredoxin] + 2 S-adenosyl-L-methionine = (sulfur carrier)-H + biotin + 2 5'-deoxyadenosine + 2 L-methionine + 2 oxidized [2Fe-2S]-[ferredoxin]. Its pathway is cofactor biosynthesis; biotin biosynthesis; biotin from 7,8-diaminononanoate: step 2/2. Its function is as follows. Catalyzes the conversion of dethiobiotin (DTB) to biotin by the insertion of a sulfur atom into dethiobiotin via a radical-based mechanism. The protein is Biotin synthase of Prochlorococcus marinus (strain MIT 9211).